The primary structure comprises 22 residues: AVWQFREMIKCTIPPSDDLLDF.

It belongs to the phospholipase A2 family. Requires Ca(2+) as cofactor.

It localises to the secreted. It catalyses the reaction a 1,2-diacyl-sn-glycero-3-phosphocholine + H2O = a 1-acyl-sn-glycero-3-phosphocholine + a fatty acid + H(+). Its function is as follows. PA2 catalyzes the calcium-dependent hydrolysis of the 2-acyl groups in 3-sn-phosphoglycerides. The sequence is that of Phospholipase A2 from Struthio camelus (Common ostrich).